The following is a 264-amino-acid chain: Ribosome-recycling factor, mitochondrial (264 aa).

This sequence belongs to the RRF family.

The protein resides in the mitochondrion. Its function is as follows. Necessary for protein synthesis in mitochondria. Functions as a ribosome recycling factor in mitochondria. The chain is Ribosome-recycling factor, mitochondrial (RRF1) from Yarrowia lipolytica (strain CLIB 122 / E 150) (Yeast).